The following is a 348-amino-acid chain: Dihydroorotase (348 aa).

2 residues coordinate Zn(2+): His-14 and His-16. Substrate-binding positions include 16–18 and Asn-42; that span reads HLR. Residues Lys-100, His-137, and His-175 each coordinate Zn(2+). Position 100 is an N6-carboxylysine (Lys-100). Position 137 (His-137) interacts with substrate. Leu-220 serves as a coordination point for substrate. Residue Asp-248 coordinates Zn(2+). Asp-248 is an active-site residue. Residues His-252 and Ala-264 each contribute to the substrate site.

The protein belongs to the metallo-dependent hydrolases superfamily. DHOase family. Class II DHOase subfamily. As to quaternary structure, homodimer. The cofactor is Zn(2+).

It catalyses the reaction (S)-dihydroorotate + H2O = N-carbamoyl-L-aspartate + H(+). It functions in the pathway pyrimidine metabolism; UMP biosynthesis via de novo pathway; (S)-dihydroorotate from bicarbonate: step 3/3. In terms of biological role, catalyzes the reversible cyclization of carbamoyl aspartate to dihydroorotate. This chain is Dihydroorotase, found in Pseudomonas putida (strain W619).